Here is a 491-residue protein sequence, read N- to C-terminus: Aspartyl/glutamyl-tRNA(Asn/Gln) amidotransferase subunit B (491 aa).

This sequence belongs to the GatB/GatE family. GatB subfamily. As to quaternary structure, heterotrimer of A, B and C subunits.

The catalysed reaction is L-glutamyl-tRNA(Gln) + L-glutamine + ATP + H2O = L-glutaminyl-tRNA(Gln) + L-glutamate + ADP + phosphate + H(+). It carries out the reaction L-aspartyl-tRNA(Asn) + L-glutamine + ATP + H2O = L-asparaginyl-tRNA(Asn) + L-glutamate + ADP + phosphate + 2 H(+). Allows the formation of correctly charged Asn-tRNA(Asn) or Gln-tRNA(Gln) through the transamidation of misacylated Asp-tRNA(Asn) or Glu-tRNA(Gln) in organisms which lack either or both of asparaginyl-tRNA or glutaminyl-tRNA synthetases. The reaction takes place in the presence of glutamine and ATP through an activated phospho-Asp-tRNA(Asn) or phospho-Glu-tRNA(Gln). The polypeptide is Aspartyl/glutamyl-tRNA(Asn/Gln) amidotransferase subunit B (Paraburkholderia phytofirmans (strain DSM 17436 / LMG 22146 / PsJN) (Burkholderia phytofirmans)).